The chain runs to 106 residues: UPF0060 membrane protein Mrad2831_0929 (106 aa).

The next 4 membrane-spanning stretches (helical) occupy residues 3-23, 30-50, 59-79, and 87-104; these read LLAY…FWAW, AWWT…LTLV, FAAY…LAEG, and LAGS…LLGR.

This sequence belongs to the UPF0060 family.

It localises to the cell inner membrane. The sequence is that of UPF0060 membrane protein Mrad2831_0929 from Methylobacterium radiotolerans (strain ATCC 27329 / DSM 1819 / JCM 2831 / NBRC 15690 / NCIMB 10815 / 0-1).